A 223-amino-acid chain; its full sequence is Ribosomal RNA small subunit methyltransferase G (223 aa).

S-adenosyl-L-methionine is bound by residues Gly-82, Leu-87, 133-134 (AE), and Arg-151.

It belongs to the methyltransferase superfamily. RNA methyltransferase RsmG family.

The protein localises to the cytoplasm. Functionally, specifically methylates the N7 position of guanine in position 518 of 16S rRNA. The sequence is that of Ribosomal RNA small subunit methyltransferase G from Corynebacterium glutamicum (strain ATCC 13032 / DSM 20300 / JCM 1318 / BCRC 11384 / CCUG 27702 / LMG 3730 / NBRC 12168 / NCIMB 10025 / NRRL B-2784 / 534).